We begin with the raw amino-acid sequence, 89 residues long: Small ribosomal subunit protein uS15 (89 aa).

It belongs to the universal ribosomal protein uS15 family. As to quaternary structure, part of the 30S ribosomal subunit. Forms a bridge to the 50S subunit in the 70S ribosome, contacting the 23S rRNA.

In terms of biological role, one of the primary rRNA binding proteins, it binds directly to 16S rRNA where it helps nucleate assembly of the platform of the 30S subunit by binding and bridging several RNA helices of the 16S rRNA. Its function is as follows. Forms an intersubunit bridge (bridge B4) with the 23S rRNA of the 50S subunit in the ribosome. This chain is Small ribosomal subunit protein uS15, found in Rhizobium leguminosarum bv. trifolii (strain WSM2304).